Reading from the N-terminus, the 995-residue chain is MSASKLWSCTETVLNGGIKLFLYSSKNTKLRVAIGEVPGPMVHGAVSFVTEADSDDGLPHTLEHLVFMGSKKYPFKGVLDVIANRCLADGTNAWTDTDHTAYTLSTVGSDGFLKVLPVYINHLLTPMLTASQFATEVHHITGEGNDAGVVYSEMQDHESEMESIMDRKTKEVIYPPFNPYAVDTGGRLKNLRESCTLEKVRDYHKKFYHLSNMVVTVCGMVDHDQVLEIMNNVENEHMSTVPDHFPKPFSFALSDIKESTVHRVECPTDDASRGAVEVAWFAHSPSDLETHSSLHVLFDYLSNTSVAPLQKDFILLEDPLASSVSFHIAEGVRCDLRLNFAGVPVEKLDECAPKFFDKTVREHLEEANFDMERMGYLIDQTILNELVKLETNAPKDIMSHIIGHQLFDNEDEELFKKRTNEIDFLKKLKSEPASYWVQLVNKYFTAPSATVIGVPNEELVDKIAEEEEKRIAAQCEKLGKKGLEEAGKSLEAAILENTANHPSAELLDQLIVKDLEAFDRFPVQSLTSNSPSLTPQQSTFLAQFPFHANLHNCPTKFVEIFFLLDSSNLSIEDRSYLFLYTDLLFESPAMIDGVLTSADDVAKHFTKDLIDHSIQVGVSGLYDRFVNLRIKVGADKYPLLAKWAQIFTQGVVFDPSRIHQCAQKLAGEARDRKRDGCTVASTAVASMVYGKNTNCILFDELVLEKLHEKISKDVMKNPEAVLEKLEQVRSALFSNGVNAHFVADVDSIDPKMLSSDLWTWVQADPRFGPGHQFSAEAGENVSLELGKELLIGVGGSESSFIYQTSFLDANWNSEELIPAMIFGQYLSQCEGPLWRAIRGDGLAYGANVFVKPDRKQITLSLYRCAQPAVAYERTRDIIRKIVESGEISKAEFEGAKRSTVFEMMKREGTVSGAAKISILNNFRQTPHPFNIDLCRRIWNLTSEEMVKIGGPPLARLFDEKCFVRSIAVHPSKLNEMKKAFPGSSKIKISDLQFAC.

This is an uncharacterized protein from Caenorhabditis elegans.